The sequence spans 239 residues: Large ribosomal subunit protein uL2 (239 aa).

The disordered stretch occupies residues 202–239 (HGGGSHQHVGRPSTVARNTPPGRKVGHIAARRTGRRKG). Positions 225 to 239 (KVGHIAARRTGRRKG) are enriched in basic residues.

This sequence belongs to the universal ribosomal protein uL2 family. In terms of assembly, part of the 50S ribosomal subunit. Forms a bridge to the 30S subunit in the 70S ribosome.

Functionally, one of the primary rRNA binding proteins. Required for association of the 30S and 50S subunits to form the 70S ribosome, for tRNA binding and peptide bond formation. It has been suggested to have peptidyltransferase activity; this is somewhat controversial. Makes several contacts with the 16S rRNA in the 70S ribosome. In Desulfurococcus amylolyticus (strain DSM 18924 / JCM 16383 / VKM B-2413 / 1221n) (Desulfurococcus kamchatkensis), this protein is Large ribosomal subunit protein uL2.